The primary structure comprises 2321 residues: Neurogenic locus notch homolog protein 3 (2321 aa).

Basic residues predominate over residues 1-14; that stretch reads MGPGARGRRRRRRP. The interval 1-26 is disordered; that stretch reads MGPGARGRRRRRRPMSPPPPPPPVRA. The N-terminal stretch at 1–39 is a signal peptide; it reads MGPGARGRRRRRRPMSPPPPPPPVRALPLLLLLAGPGAA. Residues 15–25 show a composition bias toward pro residues; it reads MSPPPPPPPVR. 3 consecutive EGF-like domains span residues 40–77, 78–118, and 119–156; these read APPC…ERCQ, LEDP…PDCS, and LPDP…RSCR. Topologically, residues 40-1643 are extracellular; the sequence is APPCLDGSPC…LEPPEPSVPL (1604 aa). 99 disulfide bridges follow: Cys-43–Cys-55, Cys-49–Cys-65, Cys-67–Cys-76, Cys-82–Cys-93, Cys-87–Cys-106, Cys-108–Cys-117, Cys-123–Cys-134, Cys-128–Cys-144, Cys-146–Cys-155, Cys-162–Cys-174, Cys-168–Cys-183, Cys-185–Cys-194, Cys-201–Cys-212, Cys-206–Cys-222, Cys-224–Cys-233, Cys-240–Cys-251, Cys-245–Cys-260, Cys-262–Cys-271, Cys-278–Cys-291, Cys-285–Cys-300, Cys-302–Cys-311, Cys-318–Cys-329, Cys-323–Cys-338, Cys-340–Cys-349, Cys-355–Cys-366, Cys-360–Cys-377, Cys-379–Cys-388, Cys-395–Cys-408, Cys-402–Cys-417, Cys-419–Cys-428, Cys-435–Cys-446, Cys-440–Cys-455, Cys-457–Cys-466, Cys-473–Cys-484, Cys-478–Cys-493, Cys-495–Cys-504, Cys-511–Cys-522, Cys-516–Cys-531, Cys-533–Cys-542, Cys-549–Cys-559, Cys-554–Cys-568, Cys-570–Cys-579, Cys-586–Cys-597, Cys-591–Cys-606, Cys-608–Cys-617, Cys-624–Cys-634, Cys-629–Cys-643, Cys-645–Cys-654, Cys-661–Cys-672, Cys-666–Cys-681, Cys-683–Cys-692, Cys-699–Cys-709, Cys-704–Cys-718, Cys-720–Cys-729, Cys-738–Cys-749, Cys-743–Cys-758, Cys-760–Cys-769, Cys-775–Cys-786, Cys-780–Cys-796, Cys-798–Cys-807, Cys-814–Cys-826, Cys-820–Cys-835, Cys-837–Cys-846, Cys-853–Cys-864, Cys-858–Cys-873, Cys-875–Cys-884, Cys-891–Cys-901, Cys-896–Cys-910, Cys-912–Cys-921, Cys-928–Cys-939, Cys-933–Cys-948, Cys-950–Cys-959, Cys-966–Cys-977, Cys-971–Cys-986, Cys-988–Cys-997, Cys-1004–Cys-1015, Cys-1009–Cys-1022, Cys-1024–Cys-1033, Cys-1040–Cys-1061, Cys-1055–Cys-1070, Cys-1072–Cys-1081, Cys-1088–Cys-1099, Cys-1093–Cys-1108, Cys-1110–Cys-1119, Cys-1126–Cys-1137, Cys-1131–Cys-1146, Cys-1148–Cys-1157, Cys-1164–Cys-1182, Cys-1176–Cys-1191, Cys-1193–Cys-1202, Cys-1209–Cys-1222, Cys-1214–Cys-1232, Cys-1234–Cys-1243, Cys-1250–Cys-1261, Cys-1255–Cys-1275, Cys-1277–Cys-1286, Cys-1293–Cys-1304, Cys-1298–Cys-1313, and Cys-1315–Cys-1324. The EGF-like 4; calcium-binding domain occupies 158 to 195; that stretch reads DVDECRVGEPCRHGGTCLNTPGSFRCQCPAGYTGPLCE. The region spanning 197–234 is the EGF-like 5 domain; that stretch reads PAVPCAPSPCRNGGTCRQSGDLTYDCACLPGFEGQNCE. The 37-residue stretch at 236–272 folds into the EGF-like 6; calcium-binding domain; the sequence is NVDDCPGHRCLNGGTCVDGVNTYNCQCPPEWTGQFCT. The region spanning 274 to 312 is the EGF-like 7 domain; that stretch reads DVDECQLQPNACHNGGTCFNTLGGHSCVCVNGWTGESCS. Residues 314 to 350 form the EGF-like 8; calcium-binding domain; the sequence is NIDDCATAVCFHGATCHDRVASFYCACPMGKTGLLCH. Residues 351 to 389 form the EGF-like 9 domain; sequence LDDACVSNPCHEDAICDTNPVNGRAICTCPPGFTGGACD. Residues 391–429 form the EGF-like 10; calcium-binding domain; that stretch reads DVDECSIGANPCEHLGRCVNTQGSFLCQCGRGYTGPRCE. One can recognise an EGF-like 11; calcium-binding domain in the interval 431–467; that stretch reads DVNECLSGPCRNQATCLDRIGQFTCICMAGFTGTYCE. The 37-residue stretch at 469–505 folds into the EGF-like 12; calcium-binding domain; sequence DIDECQSSPCVNGGVCKDRVNGFSCTCPSGFSGSTCQ. Positions 507–543 constitute an EGF-like 13; calcium-binding domain; the sequence is DVDECASTPCRNGAKCVDQPDGYECRCAEGFEGTLCD. Residues 545–580 form the EGF-like 14; calcium-binding domain; sequence NVDDCSPDPCHHGRCVDGIASFSCACAPGYTGTRCE. The EGF-like 15; calcium-binding domain occupies 582–618; the sequence is QVDECRSQPCRHGGKCLDLVDKYLCRCPSGTTGVNCE. The 36-residue stretch at 620–655 folds into the EGF-like 16; calcium-binding domain; that stretch reads NIDDCASNPCTFGVCRDGINRYDCVCQPGFTGPLCN. An EGF-like 17; calcium-binding domain is found at 657–693; the sequence is EINECASSPCGEGGSCVDGENGFRCLCPPGSLPPLCL. 3 consecutive EGF-like domains span residues 695–730, 734–770, and 771–808; these read PSHP…PRCS, ARDA…RQCE, and LLSP…PRCQ. The 38-residue stretch at 810-847 folds into the EGF-like 21; calcium-binding domain; the sequence is DVDECAGPAPCGPHGICTNLAGSFSCTCHGGYTGPSCD. In terms of domain architecture, EGF-like 22; calcium-binding spans 849–885; the sequence is DINDCDPNPCLNGGSCQDGVGSFSCSCLPGFAGPRCA. Residues 887–922 enclose the EGF-like 23; calcium-binding domain; that stretch reads DVDECLSNPCGPGTCTDHVASFTCTCPPGYGGFHCE. EGF-like domains follow at residues 924–960, 962–998, 1000–1034, 1036–1082, and 1084–1120; these read DLPD…AHCQ, EADP…PQCQ, LVDW…RLCD, RSLP…SHCE, and EVDP…DNCE. The region spanning 1122–1158 is the EGF-like 29; calcium-binding domain; the sequence is DVDECASQPCQHGGSCIDLVARYLCSCPPGTLGVLCE. Residues 1160–1203 enclose the EGF-like 30; calcium-binding domain; that stretch reads NEDDCGPGPPLDSGPRCLHNGTCVDLVGGFRCTCPPGYTGLRCE. N-linked (GlcNAc...) asparagine glycosylation is present at Asn-1179. EGF-like domains lie at 1205–1244, 1246–1287, 1289–1325, and 1335–1373; these read DINE…PRCQ, VLSP…PRCE, VARS…PSCR, and SNAS…PRCE. N-linked (GlcNAc...) asparagine glycosylation is present at Asn-1336. Disulfide bonds link Cys-1339–Cys-1350, Cys-1344–Cys-1361, Cys-1363–Cys-1372, Cys-1387–Cys-1410, Cys-1392–Cys-1405, Cys-1401–Cys-1417, Cys-1428–Cys-1451, Cys-1433–Cys-1446, Cys-1442–Cys-1458, Cys-1467–Cys-1493, Cys-1475–Cys-1488, and Cys-1484–Cys-1500. 3 LNR repeats span residues 1387–1427, 1428–1458, and 1467–1505; these read CPRA…PWRQ, CEAL…NFDC, and CNPV…SEVP. The N-linked (GlcNAc...) asparagine glycan is linked to Asn-1438. Residues 1644–1664 form a helical membrane-spanning segment; that stretch reads LPLLVAGAVLLLVILVLGVMV. Over 1665 to 2321 the chain is Cytoplasmic; it reads ARRKREHSTL…EVTPKRQVLA (657 aa). ANK repeat units follow at residues 1838–1867, 1871–1901, 1905–1934, 1938–1967, and 1971–2000; these read TGET…DTNA, SGRT…DLDA, DGST…DVNA, LGKS…NKDM, and KEET…NREI. The interval 2024–2120 is disordered; sequence LDQPSGPRSP…FGGPPASPGG (97 aa). A compositionally biased stretch (low complexity) spans 2039-2053; sequence LGPLLCPPGAFLPGL. Arg-2174 carries the post-translational modification Omega-N-methylarginine. The tract at residues 2190–2321 is disordered; that stretch reads APGPQLLNPG…EVTPKRQVLA (132 aa). Positions 2269 to 2289 are enriched in low complexity; sequence STPSPATATGAMATTTGALPA. Polar residues predominate over residues 2296–2308; sequence VPSSLAQAQTQLG.

This sequence belongs to the NOTCH family. As to quaternary structure, heterodimer of a C-terminal fragment N(TM) and a N-terminal fragment N(EC) which are probably linked by disulfide bonds. Interacts with MAML1, MAML2 and MAML3 which act as transcriptional coactivators for NOTCH3. Interacts with PSMA1. Interacts with HIF1AN. In terms of processing, synthesized in the endoplasmic reticulum as an inactive form which is proteolytically cleaved by a furin-like convertase in the trans-Golgi network before it reaches the plasma membrane to yield an active, ligand-accessible form. Cleavage results in a C-terminal fragment N(TM) and a N-terminal fragment N(EC). Following ligand binding, it is cleaved by TNF-alpha converting enzyme (TACE) to yield a membrane-associated intermediate fragment called notch extracellular truncation (NEXT). This fragment is then cleaved by presenilin dependent gamma-secretase to release a notch-derived peptide containing the intracellular domain (NICD) from the membrane. Phosphorylated. Post-translationally, hydroxylated by HIF1AN. In terms of tissue distribution, ubiquitously expressed in fetal and adult tissues.

It is found in the cell membrane. The protein resides in the nucleus. Functionally, functions as a receptor for membrane-bound ligands Jagged1, Jagged2 and Delta1 to regulate cell-fate determination. Upon ligand activation through the released notch intracellular domain (NICD) it forms a transcriptional activator complex with RBPJ/RBPSUH and activates genes of the enhancer of split locus. Affects the implementation of differentiation, proliferation and apoptotic programs. The chain is Neurogenic locus notch homolog protein 3 (NOTCH3) from Homo sapiens (Human).